The chain runs to 159 residues: Putative phosphatidylinositol-3-phosphatase (159 aa).

The first 16 residues, 1–16 (MKRPSFLPVLIGTGFG), serve as a signal peptide directing secretion. 4 helical membrane passes run 30-50 (LLASIIWIALYFLLPFTALLW), 54-74 (ALVVLFTFAGIWAANKLESCW), 104-124 (WYVIAAFALFRIFDIVKPLGV), and 134-154 (VGVMMDDVLAGVYSFILIAVA).

The protein localises to the membrane. It catalyses the reaction a 1,2-diacyl-sn-glycero-3-phospho-(1D-myo-inositol-3-phosphate) + H2O = a 1,2-diacyl-sn-glycero-3-phospho-(1D-myo-inositol) + phosphate. May be responsible for the conversion of phosphatidylinositol phosphate diacylglycerol (PIP-DAG) to phosphatidylinositol diacylglycerol (PI-DAG), making it a key enzyme in the inositol glycerophospholipid biosynthesis pathway. The sequence is that of Putative phosphatidylinositol-3-phosphatase from Bacteroides thetaiotaomicron (strain ATCC 29148 / DSM 2079 / JCM 5827 / CCUG 10774 / NCTC 10582 / VPI-5482 / E50).